The following is an 838-amino-acid chain: Extragenic suppressor of kinetochore protein 1 (838 aa).

Phosphoserine is present on residues Ser411 and Ser418. A disordered region spans residues Ser411 to Ser468. The residue at position 419 (Thr419) is a Phosphothreonine. Positions Lys423–Gly442 are enriched in basic and acidic residues. Phosphoserine occurs at positions 425, 459, 468, and 491. Over residues Thr448 to Pro460 the composition is skewed to polar residues. Thr493 bears the Phosphothreonine mark. Ser494 is subject to Phosphoserine. Residues Glu690–Val700 show a composition bias toward acidic residues. Disordered stretches follow at residues Glu690–Asn745 and Ile757–Lys838. Phosphoserine occurs at positions 711 and 713. Positions Asn714–Asp723 are enriched in acidic residues. The span at Pro724–Ser734 shows a compositional bias: basic and acidic residues. Composition is skewed to acidic residues over residues Ser768–Val779 and Ser806–Asp818.

The protein belongs to the SAPS family. As to quaternary structure, interacts with ppe1 and mis12.

It is found in the nucleus. Its function is as follows. Has a role in chromosome segregation. May provide a dynamic connection between kinetochore microtubules and kinetochore chromatin. The sequence is that of Extragenic suppressor of kinetochore protein 1 (ekc1) from Schizosaccharomyces pombe (strain 972 / ATCC 24843) (Fission yeast).